The following is a 969-amino-acid chain: Liprin-beta-1 (969 aa).

S37 carries the phosphoserine modification. T39 is subject to Phosphothreonine. Residue S40 is modified to Phosphoserine. Residues 99 to 310 are a coiled coil; the sequence is GDVYQERLAR…CLSRYRKMQD (212 aa). K291 carries the post-translational modification N6-acetyllysine. Disordered regions lie at residues 342–361, 381–407, and 424–482; these read DLER…RDLL, LLPP…FEEG, and GVST…RKAR. The segment covering 346 to 358 has biased composition (low complexity); sequence STSSTPGMGSPSR. Phosphoserine occurs at positions 403 and 435. Over residues 426 to 438 the composition is skewed to low complexity; sequence STSSLQKSSSLGN. Positions 439-452 are enriched in basic and acidic residues; that stretch reads LKKEASDGTDKAPT. K440 is covalently cross-linked (Glycyl lysine isopeptide (Lys-Gly) (interchain with G-Cter in SUMO2)). S500 is subject to Phosphoserine. Polar residues predominate over residues 518 to 529; it reads AGTSRSKGSQGT. Residues 518-593 form a disordered region; the sequence is AGTSRSKGSQ…PRLGWSRDLG (76 aa). Phosphoserine is present on S538. The span at 543 to 557 shows a compositional bias: basic residues; sequence KKSRGIMRLFGKLRR. Residues S560 and S595 each carry the phosphoserine modification. SAM domains follow at residues 606–670 and 678–741; these read WTKE…LGSE and LDFN…LRIN. Phosphoserine is present on residues S753 and S757. In terms of domain architecture, SAM 3 spans 763 to 835; sequence VQQWTNHRVM…ATHFNLLIGA (73 aa). 3 positions are modified to phosphoserine: S957, S959, and S961. A Phosphothreonine modification is found at T963.

It belongs to the liprin family. Liprin-beta subfamily. In terms of assembly, forms homodimers and heterodimers. Interacts with S100A4 in a Ca(2+)-dependent mode. Part of a cortical microtubule stabilization complex (CMSC) composed of KANK1, PPFIA1, PPFIBP1, ERC1/ELKS, PHLDB2/LL5beta, CLASPs, KIF21A and possibly additional interactors; within CMSCs KANK1 and PHLDB2/LL5beta seem to be the core components for recruiting microtubule-binding proteins KIF21A and CLASPs, whereas PPFIA1, PPFIBP1 and ERC1/ELKS serve as scaffolds for protein clustering. Interacts with KANK1 (via CC1 domain, residues 244-339).

The protein localises to the cytoplasm. It localises to the cell cortex. Its function is as follows. May regulate the disassembly of focal adhesions. Did not bind receptor-like tyrosine phosphatases type 2A. In Mus musculus (Mouse), this protein is Liprin-beta-1 (Ppfibp1).